We begin with the raw amino-acid sequence, 471 residues long: Adenosylhomocysteinase (471 aa).

Substrate is bound by residues Thr58, Asp133, and Glu195. 196 to 198 (TTT) contacts NAD(+). Substrate-binding residues include Lys225 and Asp229. Residues Asn230, 259-264 (GFGDVG), Glu282, Asn317, 338-340 (IGH), and Asn383 contribute to the NAD(+) site.

Belongs to the adenosylhomocysteinase family. Requires NAD(+) as cofactor.

It localises to the cytoplasm. The catalysed reaction is S-adenosyl-L-homocysteine + H2O = L-homocysteine + adenosine. It functions in the pathway amino-acid biosynthesis; L-homocysteine biosynthesis; L-homocysteine from S-adenosyl-L-homocysteine: step 1/1. May play a key role in the regulation of the intracellular concentration of adenosylhomocysteine. The chain is Adenosylhomocysteinase from Rhodopseudomonas palustris (strain BisB5).